Reading from the N-terminus, the 81-residue chain is Sulfur carrier protein TusA (81 aa).

Residue cysteine 19 is the Cysteine persulfide intermediate of the active site.

It belongs to the sulfur carrier protein TusA family.

It localises to the cytoplasm. In terms of biological role, sulfur carrier protein which probably makes part of a sulfur-relay system. The sequence is that of Sulfur carrier protein TusA from Shewanella frigidimarina (strain NCIMB 400).